The sequence spans 287 residues: MNTVKTVRELRAAIARARGEGKRIGFVPTMGNLHSGHAALVTKAAQRADFVVASIFVNPLQFGANEDLDKYPRTLAADQERLLQAGCNLLFAPTVEEMYPDGMAVQTRVSVPNLSEGLCGASRPGHFEGVATVVSKLFNMVQPDLAVFGEKDYQQLAVIRAMVRDLNMPIQIIGEPTVRAEDGLALSSRNGYLTAEQRATAPVVYRTLQQIGDAISRGQRDFAALVADGQAQLAAAGLRPDYLQVRHALTLRPAMVDDRDLVILVAAYLGNTRLIDNLYVHLDEKTA.

An ATP-binding site is contributed by 30 to 37 (MGNLHSGH). His-37 functions as the Proton donor in the catalytic mechanism. A (R)-pantoate-binding site is contributed by Gln-61. Gln-61 provides a ligand contact to beta-alanine. Residue 149–152 (GEKD) coordinates ATP. Residue Gln-155 coordinates (R)-pantoate. ATP contacts are provided by residues Val-178 and 186–189 (LSSR).

This sequence belongs to the pantothenate synthetase family. Homodimer.

The protein localises to the cytoplasm. The enzyme catalyses (R)-pantoate + beta-alanine + ATP = (R)-pantothenate + AMP + diphosphate + H(+). Its pathway is cofactor biosynthesis; (R)-pantothenate biosynthesis; (R)-pantothenate from (R)-pantoate and beta-alanine: step 1/1. Its function is as follows. Catalyzes the condensation of pantoate with beta-alanine in an ATP-dependent reaction via a pantoyl-adenylate intermediate. The sequence is that of Pantothenate synthetase from Pseudomonas putida (strain W619).